The primary structure comprises 141 residues: Hemoglobin subunit alpha (141 aa).

Residues 1–141 (VLSSKDKANI…VSTVLTSKYR (141 aa)) enclose the Globin domain. Residue S3 is modified to Phosphoserine. K7 and K11 each carry N6-succinyllysine. K16 carries the post-translational modification N6-acetyllysine; alternate. K16 carries the post-translational modification N6-succinyllysine; alternate. Y24 is modified (phosphotyrosine). K40 carries the post-translational modification N6-succinyllysine. Phosphoserine is present on S49. Position 58 (H58) interacts with O2. H87 contributes to the heme b binding site. S102 is subject to Phosphoserine. Position 108 is a phosphothreonine (T108). Position 124 is a phosphoserine (S124). Phosphothreonine is present on residues T134 and T137. S138 is modified (phosphoserine).

It belongs to the globin family. In terms of assembly, heterotetramer of two alpha chains and two beta chains. Red blood cells.

Functionally, involved in oxygen transport from the lung to the various peripheral tissues. Hemopressin acts as an antagonist peptide of the cannabinoid receptor CNR1. Hemopressin-binding efficiently blocks cannabinoid receptor CNR1 and subsequent signaling. This is Hemoglobin subunit alpha (HBA) from Vicugna pacos (Alpaca).